A 111-amino-acid chain; its full sequence is Ciprofloxacin tolerance protein (111 aa).

Over M1–N5 the chain is Periplasmic. A helical membrane pass occupies residues F6 to P26. The Cytoplasmic segment spans residues Y27–W30. A helical membrane pass occupies residues L31–V51. Residues Q52–P58 are Periplasmic-facing. Residues V59–L79 traverse the membrane as a helical segment. Topologically, residues R80 to R111 are cytoplasmic.

The protein localises to the cell inner membrane. Functionally, may play a role in cellular filamentation, especially in response to ciprofloxacin. Increased expression confers tolerance to the antibiotic ciprofloxacin. The chain is Ciprofloxacin tolerance protein from Acinetobacter baumannii.